A 1878-amino-acid polypeptide reads, in one-letter code: DNA polymerase (1878 aa).

Disordered regions lie at residues 691–727 and 1839–1878; these read LFQA…KGPN and TQDD…GTMF. The span at 694–709 shows a compositional bias: acidic residues; it reads ADDDDDDDDEDEDDGL. Residues 710 to 723 show a composition bias toward basic and acidic residues; that stretch reads LDERQQDSAEDMKK. A compositionally biased stretch (low complexity) spans 1868–1878; it reads ITAGKTAGTMF.

The protein belongs to the DNA polymerase type-B family.

The catalysed reaction is DNA(n) + a 2'-deoxyribonucleoside 5'-triphosphate = DNA(n+1) + diphosphate. The polypeptide is DNA polymerase (Magallana gigas (Pacific oyster)).